The primary structure comprises 505 residues: Probable inorganic carbon transporter subunit DabB (505 aa).

13 consecutive transmembrane segments (helical) span residues 9-29 (SLLT…LLFL), 37-57 (FVRI…LILA), 68-88 (WHLD…GFII), 105-123 (YFTL…WLSG), 162-182 (LFLL…HATG), 204-224 (TGIQ…WPFQ), 231-251 (IVAP…AGGI), 259-279 (LFHG…SVLI), 303-323 (GFML…HLIL), 355-375 (LWVM…WLTA), 382-402 (LISA…LVAF), 410-430 (IAGL…HHLF), and 446-466 (MSAV…GTWV).

The protein belongs to the inorganic carbon transporter (TC 9.A.2) DabB family. As to quaternary structure, forms a complex with DabA.

The protein localises to the cell membrane. In terms of biological role, part of an energy-coupled inorganic carbon pump. The chain is Probable inorganic carbon transporter subunit DabB from Bacillus subtilis (strain 168).